A 238-amino-acid chain; its full sequence is tRNA (guanine-N(7)-)-methyltransferase (238 aa).

The S-adenosyl-L-methionine site is built by E68, E93, D120, and D143. D143 is a catalytic residue. Residues K147, D179, and 216-219 (TKFE) each bind substrate.

Belongs to the class I-like SAM-binding methyltransferase superfamily. TrmB family.

The catalysed reaction is guanosine(46) in tRNA + S-adenosyl-L-methionine = N(7)-methylguanosine(46) in tRNA + S-adenosyl-L-homocysteine. It functions in the pathway tRNA modification; N(7)-methylguanine-tRNA biosynthesis. Its function is as follows. Catalyzes the formation of N(7)-methylguanine at position 46 (m7G46) in tRNA. This chain is tRNA (guanine-N(7)-)-methyltransferase, found in Aliivibrio salmonicida (strain LFI1238) (Vibrio salmonicida (strain LFI1238)).